The sequence spans 164 residues: Choriogonadotropin subunit beta (164 aa).

Residues 1 to 20 (MEMLQGLLLCLLLSTGGAWA) form the signal peptide. 6 disulfides stabilise this stretch: Cys-29/Cys-77, Cys-43/Cys-92, Cys-46/Cys-130, Cys-54/Cys-108, Cys-58/Cys-110, and Cys-113/Cys-120. Asn-50 carries an N-linked (GlcNAc...) asparagine glycan. The disordered stretch occupies residues 133–164 (HTSQDSSSKDPPRNLTSPSQLPEPADAPLVPQ). A glycan (O-linked (GalNAc...) serine) is linked at Ser-140. N-linked (GlcNAc...) asparagine glycosylation occurs at Asn-146. Ser-151 carries O-linked (GalNAc...) serine glycosylation.

Belongs to the glycoprotein hormones subunit beta family. Heterodimer of a common alpha chain and a unique beta chain which confers biological specificity to thyrotropin, lutropin, follitropin and gonadotropin.

It is found in the secreted. In terms of biological role, stimulates the ovaries to synthesize the steroids that are essential for the maintenance of pregnancy. This chain is Choriogonadotropin subunit beta (CGB), found in Aotus nancymaae (Ma's night monkey).